We begin with the raw amino-acid sequence, 95 residues long: Putative monooxygenase YcnE (95 aa).

An ABM domain is found at 2-93 (IVLQAYIKVK…APLDVVRTEL (92 aa)). A Phosphoserine modification is found at serine 24.

It belongs to the LsrG family.

Its function is as follows. Putative monooxygenase that may contribute to the degradation of aromatic compounds. The chain is Putative monooxygenase YcnE (ycnE) from Bacillus subtilis (strain 168).